Here is a 465-residue protein sequence, read N- to C-terminus: UDP-N-acetylmuramate--L-alanine ligase (465 aa).

115 to 121 (GTHGKTT) lines the ATP pocket.

Belongs to the MurCDEF family.

Its subcellular location is the cytoplasm. The enzyme catalyses UDP-N-acetyl-alpha-D-muramate + L-alanine + ATP = UDP-N-acetyl-alpha-D-muramoyl-L-alanine + ADP + phosphate + H(+). Its pathway is cell wall biogenesis; peptidoglycan biosynthesis. In terms of biological role, cell wall formation. The sequence is that of UDP-N-acetylmuramate--L-alanine ligase from Renibacterium salmoninarum (strain ATCC 33209 / DSM 20767 / JCM 11484 / NBRC 15589 / NCIMB 2235).